Reading from the N-terminus, the 370-residue chain is Early nodulin-like protein 1 (370 aa).

The N-terminal stretch at 1-27 is a signal peptide; the sequence is MSAIMKSLCFSFLILASFATFFSVADA. The Phytocyanin domain occupies 28–129; the sequence is WRFNVGGNGA…GQKLIVVVLA (102 aa). N58 is a glycosylation site (N-linked (GlcNAc...) asparagine). C83 and C117 are disulfide-bonded. Residues 135–175 show a composition bias toward low complexity; sequence SAPAHSPVPSVSPTQPPKSHSPVSPVAPASAPSKSQPPRSS. Residues 135–347 form a disordered region; that stretch reads SAPAHSPVPS…PAPSPRTNSA (213 aa). The segment covering 176 to 194 has biased composition (polar residues); that stretch reads VSPAQPPKSSSPISHTPAL. 2 stretches are compositionally biased toward low complexity: residues 195–205 and 215–290; these read SPSHATSHSPA and SPVS…QSPA. Pro residues predominate over residues 291 to 305; that stretch reads TPSPMTPQSPSPVSS. Low complexity predominate over residues 306–318; sequence PSPDQSAAPSDQS. Residues 319-334 are compositionally biased toward polar residues; that stretch reads TPLAPSPSETTPTADN. A glycan (N-linked (GlcNAc...) asparagine) is linked at N334. N345 carries GPI-anchor amidated asparagine lipidation. A propeptide spans 346–370 (removed in mature form); sequence SASGLAVTSVMSTLFSATFTFLMFA.

The protein belongs to the early nodulin-like (ENODL) family. Mostly expressed in stems, leaves and flowers, and, to a lower extent, in seedlings, roots and seeds.

The protein localises to the cell membrane. In terms of biological role, may act as a carbohydrate transporter. The polypeptide is Early nodulin-like protein 1 (Arabidopsis thaliana (Mouse-ear cress)).